The sequence spans 629 residues: 1-deoxy-D-xylulose-5-phosphate synthase (629 aa).

Thiamine diphosphate contacts are provided by residues histidine 72 and 113–115; that span reads GHA. Aspartate 144 is a Mg(2+) binding site. Thiamine diphosphate is bound by residues 145-146, asparagine 174, tyrosine 287, and glutamate 370; that span reads GA. Asparagine 174 contacts Mg(2+).

Belongs to the transketolase family. DXPS subfamily. Homodimer. The cofactor is Mg(2+). It depends on thiamine diphosphate as a cofactor.

It carries out the reaction D-glyceraldehyde 3-phosphate + pyruvate + H(+) = 1-deoxy-D-xylulose 5-phosphate + CO2. Its pathway is metabolic intermediate biosynthesis; 1-deoxy-D-xylulose 5-phosphate biosynthesis; 1-deoxy-D-xylulose 5-phosphate from D-glyceraldehyde 3-phosphate and pyruvate: step 1/1. Its function is as follows. Catalyzes the acyloin condensation reaction between C atoms 2 and 3 of pyruvate and glyceraldehyde 3-phosphate to yield 1-deoxy-D-xylulose-5-phosphate (DXP). The sequence is that of 1-deoxy-D-xylulose-5-phosphate synthase from Prochlorococcus marinus (strain MIT 9301).